The chain runs to 468 residues: Glycine--tRNA ligase (468 aa).

Substrate-binding residues include arginine 101 and glutamate 170. ATP contacts are provided by residues 202-204, 212-217, 289-290, and 333-336; these read RNE, FRTREF, EL, and GLTR. A substrate-binding site is contributed by 217-221; it reads FEQME. 329-333 serves as a coordination point for substrate; it reads EPAAG.

Belongs to the class-II aminoacyl-tRNA synthetase family. In terms of assembly, homodimer.

It is found in the cytoplasm. The catalysed reaction is tRNA(Gly) + glycine + ATP = glycyl-tRNA(Gly) + AMP + diphosphate. Its function is as follows. Catalyzes the attachment of glycine to tRNA(Gly). This is Glycine--tRNA ligase from Mycolicibacterium vanbaalenii (strain DSM 7251 / JCM 13017 / BCRC 16820 / KCTC 9966 / NRRL B-24157 / PYR-1) (Mycobacterium vanbaalenii).